A 341-amino-acid chain; its full sequence is Methionine import ATP-binding protein MetN 2 (341 aa).

Residues 2–241 form the ABC transporter domain; that stretch reads INLQNVSKIY…PKEEMTKRFV (240 aa). Residue 38–45 coordinates ATP; sequence GYSGAGKS.

This sequence belongs to the ABC transporter superfamily. Methionine importer (TC 3.A.1.24) family. As to quaternary structure, the complex is composed of two ATP-binding proteins (MetN), two transmembrane proteins (MetI) and a solute-binding protein (MetQ).

Its subcellular location is the cell membrane. The enzyme catalyses L-methionine(out) + ATP + H2O = L-methionine(in) + ADP + phosphate + H(+). The catalysed reaction is D-methionine(out) + ATP + H2O = D-methionine(in) + ADP + phosphate + H(+). Functionally, part of the ABC transporter complex MetNIQ involved in methionine import. Responsible for energy coupling to the transport system. The chain is Methionine import ATP-binding protein MetN 2 from Bacillus licheniformis (strain ATCC 14580 / DSM 13 / JCM 2505 / CCUG 7422 / NBRC 12200 / NCIMB 9375 / NCTC 10341 / NRRL NRS-1264 / Gibson 46).